A 722-amino-acid polypeptide reads, in one-letter code: Transmembrane channel-like protein 8 (722 aa).

The segment at 1-21 (MFRQWSVQSGPAPRRPESQAA) is disordered. Topologically, residues 1–118 (MFRQWSVQSG…GIQSYFTFLR (118 aa)) are cytoplasmic. Serine 6 and serine 18 each carry phosphoserine. A helical membrane pass occupies residues 119–139 (FLLLLNLLTMLLTACFVLLPL). At 140-204 (VWLRPPELGP…AGPESSSEYS (65 aa)) the chain is on the lumenal side. Asparagine 184 carries N-linked (GlcNAc...) asparagine glycosylation. The chain crosses the membrane as a helical span at residues 205-225 (IRLAYLLSPMVCLLLCFCGIL). Residues 226–307 (QRMAEGLPQQ…CRLLTYLRTN (82 aa)) are Cytoplasmic-facing. The chain crosses the membrane as a helical span at residues 308-328 (ILIVLLVVGAISAIFWATKYS). The Lumenal portion of the chain corresponds to 329 to 375 (QDNKEESLFLVLQYLPPGVISLVNFLGPQLFTVLIQLENYPPGTEVN). The segment at 366 to 534 (ENYPPGTEVN…SPRRFRASSS (169 aa)) is TMC domain. Asparagine 375 carries an N-linked (GlcNAc...) asparagine glycan. The chain crosses the membrane as a helical span at residues 376–396 (LTLIWCVVLKLASLGMFSFSL). The Cytoplasmic portion of the chain corresponds to 397-430 (GQTVLCIGRNKTSCESYGYNACDYQCWENSVGEE). A helical transmembrane segment spans residues 431 to 451 (LYKLIIFNFLLTVAFAFLVSL). The Lumenal segment spans residues 452–492 (PRRLLVERFSGWFWTWLDREEFLVPKNVLDIVAAQTVTWMG). A helical membrane pass occupies residues 493-513 (LFYCPLLPLLNSVFLFLTFYI). Residues 514-536 (KKYTLLRNSRASPRRFRASSSTF) are Cytoplasmic-facing. Residues 537-557 (FFHLVLLLGLLLAAVPLAYVI) traverse the membrane as a helical segment. Over 558-598 (SSTHSSWDCGLFTNYSAPWQVVPELVALQLPLPSQRALRYL) the chain is Lumenal. An N-linked (GlcNAc...) asparagine glycan is attached at asparagine 571. Residues 599-619 (SSHAFSFPLLILLSIVLTVCI) traverse the membrane as a helical segment. The Cytoplasmic portion of the chain corresponds to 620–722 (SQSRANARAI…RFHFPSRTEL (103 aa)). 3 positions are modified to phosphoserine: serine 658, serine 663, and serine 673. A disordered region spans residues 658–722 (SPEPGSPHSR…RFHFPSRTEL (65 aa)). Residues 678–687 (FPCPGSPGPR) are compositionally biased toward pro residues. Residues 689-712 (PRLAPSNRLSSSSLGAPSASVPAS) are compositionally biased toward low complexity. Serine 698 bears the Phosphoserine mark.

Belongs to the TMC family. In terms of assembly, interacts with TMC6. Interacts and forms a complex with TMC6 and CIB1; the interaction stabilizes each component of the complex. Interacts and forms a complex with TMC6 and SLC30A1/ZNT1; the interaction regulates zinc transport into the ER. Interacts with TRADD; the interaction competes with TRADD/RIPK1/TRAF2/cIAPs complex I formation and facilites complex II formation. In terms of tissue distribution, expressed in thymus, lung, prostate, placenta, testis and spleen. Expressed in lymphocytes and peripheral lymphocytes.

The protein resides in the endoplasmic reticulum membrane. It localises to the golgi apparatus membrane. Its subcellular location is the nucleus membrane. In terms of biological role, acts as a regulatory protein involved in the regulation of numerous cellular processes. Together with its homolog TMC6/EVER1, forms a complex with calcium-binding protein CIB1 in lymphocytes and keratynocytes where TMC6 and TMC8 stabilize CIB1 levels and reciprocally. Together with TMC6, also forms a complex with and activates zinc transporter ZNT1 at the ER membrane of keratynocytes, thereby facilitating zinc uptake into the ER. Also inhibits receptor-mediated calcium release from ER stores and calcium activated and volume regulated chloride channels. Down-regulates the activity of transcription factors induced by zinc and cytokines. Also sequesters TRADD which impairs the recruitment of TRAF2 and RIPK1 in the pro-survival complex I and promotes proapoptotic complex II formation, and may therefore be involved in TNF-induced cell death/survival decisions. This chain is Transmembrane channel-like protein 8, found in Mus musculus (Mouse).